The primary structure comprises 201 residues: Oligoribonuclease (201 aa).

In terms of domain architecture, Exonuclease spans 20–183 (LVWLDMEMTG…ADIHESIDEL (164 aa)). Tyr-141 is an active-site residue.

It belongs to the oligoribonuclease family.

It is found in the cytoplasm. Its function is as follows. 3'-to-5' exoribonuclease specific for small oligoribonucleotides. In Burkholderia pseudomallei (strain 1106a), this protein is Oligoribonuclease.